The sequence spans 213 residues: Glycerol-3-phosphate acyltransferase (213 aa).

Transmembrane regions (helical) follow at residues 2–22 (ITIV…GLWI), 54–74 (MATF…PIMF), 80–100 (SPLI…FAGF), 110–130 (AGVV…VFFG), 143–163 (VTAS…GFIL), and 165–185 (NYDP…IIRH).

This sequence belongs to the PlsY family. Probably interacts with PlsX.

Its subcellular location is the cell membrane. The enzyme catalyses an acyl phosphate + sn-glycerol 3-phosphate = a 1-acyl-sn-glycero-3-phosphate + phosphate. It functions in the pathway lipid metabolism; phospholipid metabolism. Functionally, catalyzes the transfer of an acyl group from acyl-phosphate (acyl-PO(4)) to glycerol-3-phosphate (G3P) to form lysophosphatidic acid (LPA). This enzyme utilizes acyl-phosphate as fatty acyl donor, but not acyl-CoA or acyl-ACP. In Streptococcus pneumoniae (strain Taiwan19F-14), this protein is Glycerol-3-phosphate acyltransferase.